The primary structure comprises 49 residues: Large ribosomal subunit protein bL33A (49 aa).

This sequence belongs to the bacterial ribosomal protein bL33 family.

The chain is Large ribosomal subunit protein bL33A from Staphylococcus aureus (strain Mu3 / ATCC 700698).